The sequence spans 263 residues: MSVDNFRLDGKVALVTGSGRGIGAAIAIELGKRGANVVVNYSRAVAEANKVVETIIANGTKAIAIKADVGEIDQVAKMMDQAVEHFGQLDIVSSNAGLVSFGHLKDVTGDEFDRVFRVNTRGQFFVAREAYRHLSVGGRIILTSSNTASIKGVPKHAIYSGSKGAIDTFVRCMAIDAGDKKITVNAVAPGAIKTDMYAAVAREYIPGGDKFTDEQVDECAAWLSPLERVGLPADIGRVVCFLASDAAEWVSGKILGIDGGAFR.

4 residues coordinate NADP(+): isoleucine 22, aspartate 68, asparagine 95, and arginine 128. Residues serine 144 and serine 145 each act as proton donor in the active site. The NADP(+) site is built by tyrosine 159, lysine 163, isoleucine 192, and threonine 194. Residue tyrosine 159 is the Proton acceptor of the active site. Residue lysine 163 is the Lowers pKa of active site Tyr of the active site.

The protein belongs to the short-chain dehydrogenases/reductases (SDR) family.

The protein localises to the cytoplasm. It localises to the cytosol. The protein operates within mycotoxin biosynthesis. In terms of biological role, versicolorin reductase; part of the fragmented gene cluster that mediates the biosynthesis of dothistromin (DOTH), a polyketide toxin very similar in structure to the aflatoxin precursor, versicolorin B. The first step of the pathway is the conversion of acetate to norsolorinic acid (NOR) and requires the fatty acid synthase subunits hexA and hexB, as well as the polyketide synthase pksA. PksA combines a hexanoyl starter unit and 7 malonyl-CoA extender units to synthesize the precursor NOR. The hexanoyl starter unit is provided to the acyl-carrier protein (ACP) domain by the fungal fatty acid synthase hexA/hexB. The second step is the conversion of NOR to averantin (AVN) and requires the norsolorinic acid ketoreductase nor1, which catalyzes the dehydration of norsolorinic acid to form (1'S)-averantin. The cytochrome P450 monooxygenase avnA then catalyzes the hydroxylation of AVN to 5'hydroxyaverantin (HAVN). The next step is performed by adhA that transforms HAVN to averufin (AVF). Averufin might then be converted to hydroxyversicolorone by cypX and avfA. Hydroxyversicolorone is further converted versiconal hemiacetal acetate (VHA) by moxY. VHA is then the substrate for the versiconal hemiacetal acetate esterase est1 to yield versiconal (VAL). Versicolorin B synthase vbsA then converts VAL to versicolorin B (VERB) by closing the bisfuran ring. Then, the activity of the versicolorin B desaturase verB leads to versicolorin A (VERA). DotB, a predicted chloroperoxidase, may perform epoxidation of the A-ring of VERA. Alternatively, a cytochrome P450, such as cypX or avnA could catalyze this step. It is also possible that another, uncharacterized, cytochrome P450 enzyme is responsible for this step. Opening of the epoxide could potentially be achieved by the epoxide hydrolase epoA. However, epoA seems not to be required for DOTH biosynthesis, but other epoxide hydrolases may have the ability to complement this hydrolysis. Alternatively, opening of the epoxide ring could be achieved non-enzymatically. The next step is the deoxygenation of ring A to yield the 5,8-dihydroxyanthraquinone which is most likely catalyzed by the NADPH dehydrogenase encoded by ver1. The last stages of DOTH biosynthesis are proposed to involve hydroxylation of the bisfuran. OrdB and norB might have oxidative roles here. An alternative possibility is that cytochrome P450 monoogenases such as avnA and cypX might perform these steps in addition to previously proposed steps. The chain is Versicolorin reductase 1 from Dothistroma septosporum (Red band needle blight fungus).